The following is a 526-amino-acid chain: Bifunctional purine biosynthesis protein PurH (526 aa).

The MGS-like domain occupies 1–147 (MPSIKRALIS…KNWKHVAIVT (147 aa)).

Belongs to the PurH family.

It catalyses the reaction (6R)-10-formyltetrahydrofolate + 5-amino-1-(5-phospho-beta-D-ribosyl)imidazole-4-carboxamide = 5-formamido-1-(5-phospho-D-ribosyl)imidazole-4-carboxamide + (6S)-5,6,7,8-tetrahydrofolate. The catalysed reaction is IMP + H2O = 5-formamido-1-(5-phospho-D-ribosyl)imidazole-4-carboxamide. It participates in purine metabolism; IMP biosynthesis via de novo pathway; 5-formamido-1-(5-phospho-D-ribosyl)imidazole-4-carboxamide from 5-amino-1-(5-phospho-D-ribosyl)imidazole-4-carboxamide (10-formyl THF route): step 1/1. The protein operates within purine metabolism; IMP biosynthesis via de novo pathway; IMP from 5-formamido-1-(5-phospho-D-ribosyl)imidazole-4-carboxamide: step 1/1. This is Bifunctional purine biosynthesis protein PurH from Neisseria meningitidis serogroup C / serotype 2a (strain ATCC 700532 / DSM 15464 / FAM18).